We begin with the raw amino-acid sequence, 372 residues long: Phospho-2-dehydro-3-deoxyheptonate aldolase, tyrosine-inhibited (372 aa).

It belongs to the class-I DAHP synthase family.

It localises to the cytoplasm. The protein localises to the nucleus. The enzyme catalyses D-erythrose 4-phosphate + phosphoenolpyruvate + H2O = 7-phospho-2-dehydro-3-deoxy-D-arabino-heptonate + phosphate. It participates in metabolic intermediate biosynthesis; chorismate biosynthesis; chorismate from D-erythrose 4-phosphate and phosphoenolpyruvate: step 1/7. In terms of biological role, stereospecific condensation of phosphoenolpyruvate (PEP) and D-erythrose-4-phosphate (E4P) giving rise to 3-deoxy-D-arabino-heptulosonate-7-phosphate (DAHP). The chain is Phospho-2-dehydro-3-deoxyheptonate aldolase, tyrosine-inhibited (aro4) from Schizosaccharomyces pombe (strain 972 / ATCC 24843) (Fission yeast).